The following is a 462-amino-acid chain: Argininosuccinate lyase (462 aa).

This sequence belongs to the lyase 1 family. Argininosuccinate lyase subfamily.

It is found in the cytoplasm. It catalyses the reaction 2-(N(omega)-L-arginino)succinate = fumarate + L-arginine. The protein operates within amino-acid biosynthesis; L-arginine biosynthesis; L-arginine from L-ornithine and carbamoyl phosphate: step 3/3. The sequence is that of Argininosuccinate lyase from Bacillus thuringiensis (strain Al Hakam).